The following is a 66-amino-acid chain: Small vasohibin-binding protein (66 aa).

Over residues 1–23 (MDPPARKEKSKVKEPAFRVEKAK) the composition is skewed to basic and acidic residues. Positions 1–30 (MDPPARKEKSKVKEPAFRVEKAKQKSAQQE) are disordered. The stretch at 5-52 (ARKEKSKVKEPAFRVEKAKQKSAQQELKQRQRAEIYALNRVMTELEQQ) forms a coiled coil.

The protein belongs to the SVBP family. As to quaternary structure, interacts with VASH1 and VASH2. As to expression, highly expressed in bone marrow, spleen and testis.

Its subcellular location is the cytoplasm. It is found in the secreted. It localises to the cytoskeleton. Enhances the tyrosine carboxypeptidase activity of VASH1 and VASH2, thereby promoting the removal of the C-terminal tyrosine residue of alpha-tubulin. Also required to enhance the solubility and secretion of VASH1 and VASH2. Plays a role in axon and excitatory synapse formation. The chain is Small vasohibin-binding protein from Mus musculus (Mouse).